Here is a 137-residue protein sequence, read N- to C-terminus: Oleosin Ara h 11.0101 (137 aa).

Ala-2 carries the N-acetylalanine; alternate modification. A run of 2 helical transmembrane segments spans residues 27 to 47 (AVVA…GTVI) and 55 to 75 (LFVI…LLGL).

This sequence belongs to the oleosin family. In terms of tissue distribution, expressed in seeds (at protein level).

It localises to the lipid droplet. Its subcellular location is the membrane. May have a structural role to stabilize the lipid body during desiccation of the seed by preventing coalescence of the oil. Probably interacts with both lipid and phospholipid moieties of lipid bodies. May also provide recognition signals for specific lipase anchorage in lipolysis during seedling growth. This is Oleosin Ara h 11.0101 from Arachis hypogaea (Peanut).